The chain runs to 332 residues: L-lactate dehydrogenase A chain (332 aa).

At alanine 2 the chain carries N-acetylalanine. Lysine 5 bears the N6-acetyllysine; alternate mark. An N6-succinyllysine; alternate modification is found at lysine 5. Lysine 14 is subject to N6-acetyllysine. Threonine 18 is modified (phosphothreonine). 29–57 (GAVGMACAISILMKDLADELALVDVIEDK) serves as a coordination point for NAD(+). Lysine 57 carries the post-translational modification N6-acetyllysine; alternate. A Glycyl lysine isopeptide (Lys-Gly) (interchain with G-Cter in SUMO2); alternate cross-link involves residue lysine 57. N6-acetyllysine is present on lysine 81. NAD(+) is bound at residue arginine 99. A substrate-binding site is contributed by arginine 106. Lysine 118 is modified (N6-acetyllysine; alternate). Lysine 118 is modified (N6-succinyllysine; alternate). Residue lysine 126 is modified to N6-acetyllysine. Substrate-binding residues include asparagine 138 and arginine 169. Catalysis depends on histidine 193, which acts as the Proton acceptor. Residues lysine 224 and lysine 232 each carry the N6-acetyllysine modification. A Phosphotyrosine modification is found at tyrosine 239. Position 243 is an N6-acetyllysine (lysine 243). Threonine 248 provides a ligand contact to substrate. The residue at position 309 (threonine 309) is a Phosphothreonine. Serine 310 carries the phosphoserine modification. Lysine 318 carries the post-translational modification N6-acetyllysine; alternate. N6-succinyllysine; alternate is present on lysine 318. At threonine 322 the chain carries Phosphothreonine.

Belongs to the LDH/MDH superfamily. LDH family. In terms of assembly, homotetramer. Interacts with PTEN upstream reading frame protein MP31. ISGylated.

It localises to the cytoplasm. It catalyses the reaction (S)-lactate + NAD(+) = pyruvate + NADH + H(+). It functions in the pathway fermentation; pyruvate fermentation to lactate; (S)-lactate from pyruvate: step 1/1. Functionally, interconverts simultaneously and stereospecifically pyruvate and lactate with concomitant interconversion of NADH and NAD(+). The chain is L-lactate dehydrogenase A chain (LDHA) from Pan troglodytes (Chimpanzee).